We begin with the raw amino-acid sequence, 397 residues long: N-acetyllactosaminide beta-1,3-N-acetylglucosaminyltransferase 2 (397 aa).

Topologically, residues methionine 1 to arginine 7 are cytoplasmic. The chain crosses the membrane as a helical; Signal-anchor for type II membrane protein span at residues valine 8 to serine 28. Residues lysine 29 to arginine 325 are Lumenal-facing. 6 N-linked (GlcNAc...) asparagine glycosylation sites follow: asparagine 30, asparagine 79, asparagine 89, asparagine 127, asparagine 173, and asparagine 219.

The protein belongs to the glycosyltransferase 31 family. Interacts with B3GNT8; this interaction greatly increases B3GNT2 catalytic activity, independently of B3GNT8 enzymatic activity. Requires Mn(2+) as cofactor. Expressed in heart, brain, lung, kidney and testis and, to a lesser extent, in liver and skeletal muscle. No expression in spleen.

The protein localises to the golgi apparatus membrane. The enzyme catalyses a beta-D-galactosyl-(1-&gt;4)-N-acetyl-beta-D-glucosaminyl derivative + UDP-N-acetyl-alpha-D-glucosamine = an N-acetyl-beta-D-glucosaminyl-(1-&gt;3)-beta-D-galactosyl-(1-&gt;4)-N-acetyl-beta-D-glucosaminyl derivative + UDP + H(+). The protein operates within protein modification; protein glycosylation. Beta-1,3-N-acetylglucosaminyltransferase involved in the synthesis of poly-N-acetyllactosamine. Catalyzes the initiation and elongation of poly-N-acetyllactosamine chains. Probably constitutes the main polylactosamine synthase. In Mus musculus (Mouse), this protein is N-acetyllactosaminide beta-1,3-N-acetylglucosaminyltransferase 2 (B3GNT2).